Consider the following 234-residue polypeptide: Large ribosomal subunit protein uL1 (234 aa).

It belongs to the universal ribosomal protein uL1 family. In terms of assembly, part of the 50S ribosomal subunit.

Binds directly to 23S rRNA. The L1 stalk is quite mobile in the ribosome, and is involved in E site tRNA release. Its function is as follows. Protein L1 is also a translational repressor protein, it controls the translation of the L11 operon by binding to its mRNA. The sequence is that of Large ribosomal subunit protein uL1 from Wolinella succinogenes (strain ATCC 29543 / DSM 1740 / CCUG 13145 / JCM 31913 / LMG 7466 / NCTC 11488 / FDC 602W) (Vibrio succinogenes).